The following is a 332-amino-acid chain: Ethylene-responsive transcription factor ERF119 (332 aa).

The tract at residues 1-33 is disordered; that stretch reads MAERKKRSSIQTNKPNKKPMKKKPFQLNHLPGL. Positions 15–24 are enriched in basic residues; the sequence is PNKKPMKKKP. The AP2/ERF DNA-binding region spans 130-187; it reads KPVGVRQRKWGKWAAEIRHPITKVRTWLGTYETLEQAADAYATKKLEFDALAAATSAA.

The protein belongs to the AP2/ERF transcription factor family. ERF subfamily.

It localises to the nucleus. In terms of biological role, probably acts as a transcriptional activator. Binds to the GCC-box pathogenesis-related promoter element. May be involved in the regulation of gene expression by stress factors and by components of stress signal transduction pathways. This is Ethylene-responsive transcription factor ERF119 (ERF119) from Arabidopsis thaliana (Mouse-ear cress).